The primary structure comprises 84 residues: Beta-mammal Tt1g (84 aa).

An N-terminal signal peptide occupies residues 1–20 (MKGMILFISCILLIGIVVEC). One can recognise an LCN-type CS-alpha/beta domain in the interval 21–82 (KEGYLMDHEG…VWERATNRCG (62 aa)). Cystine bridges form between cysteine 31–cysteine 81, cysteine 35–cysteine 57, cysteine 43–cysteine 62, and cysteine 47–cysteine 64. Cysteine 81 is subject to Cysteine amide.

It belongs to the long (4 C-C) scorpion toxin superfamily. Sodium channel inhibitor family. Beta subfamily. In terms of tissue distribution, expressed by the venom gland.

It is found in the secreted. Its function is as follows. Beta toxins modify sodium channel function in two ways: an excitatory effect (shifting the activation process to more negative potential) and/or a depressant effect (reducing the peak current). At concentration of 500 nM this toxin produces channel opening at more negative potentials in hNav1.2/SCN2A and hNav1.3/SCN3A, which shows the biggest effect. On the other hand the peak current is decreased in hNav1.4/SCN4A and hNav1.5/SCN5A channels, without apparent modification of the activation gate. This toxin is active against mammals. The protein is Beta-mammal Tt1g of Tityus trivittatus (Argentinean scorpion).